Here is a 300-residue protein sequence, read N- to C-terminus: Phosphoribosylaminoimidazole-succinocarboxamide synthase (300 aa).

Belongs to the SAICAR synthetase family.

It catalyses the reaction 5-amino-1-(5-phospho-D-ribosyl)imidazole-4-carboxylate + L-aspartate + ATP = (2S)-2-[5-amino-1-(5-phospho-beta-D-ribosyl)imidazole-4-carboxamido]succinate + ADP + phosphate + 2 H(+). Its pathway is purine metabolism; IMP biosynthesis via de novo pathway; 5-amino-1-(5-phospho-D-ribosyl)imidazole-4-carboxamide from 5-amino-1-(5-phospho-D-ribosyl)imidazole-4-carboxylate: step 1/2. The polypeptide is Phosphoribosylaminoimidazole-succinocarboxamide synthase (Methylibium petroleiphilum (strain ATCC BAA-1232 / LMG 22953 / PM1)).